Here is an 887-residue protein sequence, read N- to C-terminus: Alanine--tRNA ligase (887 aa).

4 residues coordinate Zn(2+): H563, H567, C677, and H681.

This sequence belongs to the class-II aminoacyl-tRNA synthetase family. Zn(2+) serves as cofactor.

It is found in the cytoplasm. It catalyses the reaction tRNA(Ala) + L-alanine + ATP = L-alanyl-tRNA(Ala) + AMP + diphosphate. Catalyzes the attachment of alanine to tRNA(Ala) in a two-step reaction: alanine is first activated by ATP to form Ala-AMP and then transferred to the acceptor end of tRNA(Ala). Also edits incorrectly charged Ser-tRNA(Ala) and Gly-tRNA(Ala) via its editing domain. In Dinoroseobacter shibae (strain DSM 16493 / NCIMB 14021 / DFL 12), this protein is Alanine--tRNA ligase.